Reading from the N-terminus, the 356-residue chain is Arginine kinase (356 aa).

Ala2 carries the post-translational modification N-acetylalanine. Residues 9–91 (KLEAGFKKLE…FDPIIEDYHV (83 aa)) enclose the Phosphagen kinase N-terminal domain. Residue 64–68 (GVGIY) participates in L-arginine binding. One can recognise a Phosphagen kinase C-terminal domain in the interval 119–356 (YVISTRVRCG…LELIKMEKEM (238 aa)). ATP-binding positions include 122 to 126 (STRVR) and His185. An L-arginine-binding site is contributed by Glu225. Arg229 lines the ATP pocket. Residue Cys271 participates in L-arginine binding. Residues 280-284 (RASVH) and 309-314 (RGTRGE) each bind ATP. An L-arginine-binding site is contributed by Glu314.

The protein belongs to the ATP:guanido phosphotransferase family.

The enzyme catalyses L-arginine + ATP = N(omega)-phospho-L-arginine + ADP + H(+). This is Arginine kinase from Penaeus monodon (Giant tiger prawn).